The primary structure comprises 120 residues: Aspartate 1-decarboxylase (120 aa).

Ser-25 functions as the Schiff-base intermediate with substrate; via pyruvic acid in the catalytic mechanism. Ser-25 bears the Pyruvic acid (Ser) mark. Thr-57 lines the substrate pocket. Catalysis depends on Tyr-58, which acts as the Proton donor. A substrate-binding site is contributed by 73–75 (GAA).

The protein belongs to the PanD family. Heterooctamer of four alpha and four beta subunits. Requires pyruvate as cofactor. Post-translationally, is synthesized initially as an inactive proenzyme, which is activated by self-cleavage at a specific serine bond to produce a beta-subunit with a hydroxyl group at its C-terminus and an alpha-subunit with a pyruvoyl group at its N-terminus.

The protein localises to the cytoplasm. The enzyme catalyses L-aspartate + H(+) = beta-alanine + CO2. The protein operates within cofactor biosynthesis; (R)-pantothenate biosynthesis; beta-alanine from L-aspartate: step 1/1. Catalyzes the pyruvoyl-dependent decarboxylation of aspartate to produce beta-alanine. The protein is Aspartate 1-decarboxylase of Cupriavidus taiwanensis (strain DSM 17343 / BCRC 17206 / CCUG 44338 / CIP 107171 / LMG 19424 / R1) (Ralstonia taiwanensis (strain LMG 19424)).